The sequence spans 643 residues: Pescadillo homolog (643 aa).

The 94-residue stretch at 319–412 folds into the BRCT domain; it reads KLKTLFKGLK…RLLPTNKYFM (94 aa). Disordered stretches follow at residues 437-475, 492-571, and 609-643; these read AARK…PENE, TDSL…YREN, and DKNA…QILA. A compositionally biased stretch (acidic residues) spans 464–475; it reads SDDEEVQDPENE. The segment covering 492–518 has biased composition (basic and acidic residues); the sequence is TDSLNSGKKEGADDATDNGKDAAEKKQ. Acidic residues predominate over residues 524-544; the sequence is GESDDEDEEEEDDDDGEEEED. Residues 569-643 are a coiled coil; sequence RENEAEKKIV…QKQQRKQILA (75 aa). A compositionally biased stretch (basic and acidic residues) spans 609 to 635; sequence DKNARLLANKRERIEKQKRAEQMEKQK.

The protein belongs to the pescadillo family.

Its subcellular location is the nucleus. The protein resides in the nucleolus. The protein localises to the nucleoplasm. Required for maturation of ribosomal RNAs and formation of the large ribosomal subunit. This chain is Pescadillo homolog, found in Anopheles gambiae (African malaria mosquito).